A 1305-amino-acid polypeptide reads, in one-letter code: MIGCHCHTDRSNIRLLDSTNSVKELLKTAVKMEYKGLAITDHEVLSAHLDAIRTVREMKKKGDMPEDFKLILGNEAYLVDSLEEVRDNYKSGVTKFPHFLMLAMDPKGHEQLRILSSQAWENSFYTGTMERVPTVKKDVEELLSKDPGHIIATTACLGSEVNIHLLKIKAFEETGDSQSIKQHKLKIHEFITWCIEVFGKDKFFIELQPALSEEQIYCNKKLIDIANGYDLQMIVTTDAHYLRPEDRAIHQAFLNAKDGEREVDSFYEACFVQNVDEIHERMDYIDKEVIDQAIKNTMLIGEMIEDYTIEHEPIIPKMELPNFKLRHLFKPAYDQYEYIKKMSESADEQDRYLLKLIEDGFEEKLKTSELTREAFHKILNRINVELGELWEISQKLNQSMSSYYITVREIINIIWDDECGGDSLVGAARGSAAGYLVNYLLDNTQINPMQYDLPHWRHIHKSRPDLPDIDIDTEGSKRQKILKALRERFGDKRVLQIATFGTEGSKSALQTACRGLGIDNDISQYLSGMIPFERGSNWPLKHCFYGDKETGRKPIKEFIREVEQYPNLKETALKIEGLTNKRSSHAAGVIIFNDEYTKSNAMMKTPKGAYITQFNMGDSEAMGSVKFDLLTIEALDKIRVTLDQLIENNEIEWQGSLKETYNKYIHPDVIEYEDDKLWEMAGNGEIMDLFQFSTEVGHQSVVKVKPKNLLEAAVTNSLMRLMSDGEEQPVDTYVKYKNNLNKWYEEMTRYGLSEKEIRVMERHLKDIYGVADTQEVVMQMVMDKDIANFDIKESNYLRKSIAKKKEDVLKEVEELFFKKGKEIGTSDNLLNYVWNVQFKRQFGYSFSLLHTLAYSIIALQELNLNYRYNPLYWNTACLTVNSGGIDTEDTKDNKKTAATNYGKVASAIGNIRQRGIKIDLPDINKADFGFRTDINNNSILFGLKGMNGIGDDVIHHIVLNRPYSDFNDFIERMFKSGIIKKGQVIQLIKGGCFDSFGNRQEIMKAFISLISEPKSKLTLSNLKMLIENNIVPSEFAQEVRFFRFKDYISKKVYKTLKSPKDKLFLLDDVSASFYNQHFSEDSVVDMLNGQLVISEKAFKKEYDNKMSNIKSWITTEEPLKKLNDCLLIKEWEKYADGSLGKWEMDSLSYYYNDHELSGVNFAKYDIADFYKLPAEPVKGKPYQWRGKTLYEYETTRIIGTVLDRDKNKHAITLLTPTGVVTVKQWSGSFSHYNKQISRSIGGGKKEVIEKSWYTRGTLLMFTGFRRGNNFIPKVYKDSIYNHTVCRIDFVDNEGSMSLTTKRAEI.

Belongs to the DNA polymerase type-C family.

The catalysed reaction is DNA(n) + a 2'-deoxyribonucleoside 5'-triphosphate = DNA(n+1) + diphosphate. In terms of biological role, replicates viral genomic DNA. The protein is DNA-directed DNA polymerase of Bacillus pumilus (Bacillus mesentericus).